Reading from the N-terminus, the 1032-residue chain is Baseplate wedge protein gp7 (1032 aa).

Residues 1012–1032 form a disordered region; sequence LKDNIGNPRDPENPTQVKIDE.

This sequence belongs to the T4likevirus baseplate wedge protein gp7 family. In terms of assembly, heterotrimer with gp6; assembles as a (gp6)2-gp7 heterotrimeric molecule. The (gp6)2-gp7 heterotrimeric molecule further interacts with gp25 and gp53. The gp25-(gp6)2-gp7 module is involved in sheath contraction. Interacts with gp8. Binds to gp10 homotrimer; disulfide-linked. Heteromultimer with gp10; a gp10 molecule is disulfide-linked to gp7 and the other two remaining gp10 molecules form a disulfide bond. Part of the baseplate macromolecular complex which consists of gp5, gp5.4, gp27 (central spike complex); gp6, gp25, gp53 (inner baseplate); gp7, gp8 (intermediate baseplate); gp9, gp10, gp11, gp12 (peripheral); gp48 and gp54 (proximal region of the tail tube).

Its subcellular location is the virion. Its function is as follows. Intermediate/inner baseplate protein. The gp25-(gp6)2-gp7 module is involved in sheath contraction. Involved in the tail assembly. The sequence is that of Baseplate wedge protein gp7 (7) from Enterobacteria phage T4 (Bacteriophage T4).